Consider the following 382-residue polypeptide: Sphingosine kinase 1 (382 aa).

Positions 12 to 159 (PRPCRVLVLL…MNLLSLHTAS (148 aa)) constitute a DAGKc domain. Residues 22 to 24 (NPQ) and 54 to 58 (TERKN) contribute to the ATP site. Residue 79 to 82 (SGDG) coordinates substrate. Catalysis depends on aspartate 81, which acts as the Proton donor/acceptor. Residues glutamate 86 and 111-113 (GSG) each bind ATP. Short sequence motifs (nuclear export signal) lie at residues 147–155 (LSPMNLLSL) and 161–169 (LRLYSVLSL). Position 178 (aspartate 178) interacts with substrate. Residues arginine 185 and arginine 191 each coordinate ATP. The residue at position 193 (threonine 193) is a Phosphothreonine. At serine 225 the chain carries Phosphoserine. 340–342 (DGE) is an ATP binding site.

In terms of assembly, interacts with ACY1. Binds to calmodulin. Interacts with SPHKAP. Interacts with CIB1, the interaction occurs in a calcium-dependent manner. Interacts with TRAF2. Interacts with EEF1A1; the interaction enhances SPHK1 kinase activity. It depends on Mg(2+) as a cofactor. In terms of tissue distribution, widely expressed. Expressed in brain (at protein level). Detected in neurons.

It is found in the cytoplasm. Its subcellular location is the endosome membrane. It localises to the nucleus. The protein localises to the cell membrane. The protein resides in the synapse. It catalyses the reaction a sphingoid base + ATP = a sphingoid 1-phosphate + ADP + H(+). The catalysed reaction is L-seryl-[protein] + acetyl-CoA = O-acetyl-L-seryl-[protein] + CoA. The enzyme catalyses sphinganine + ATP = sphinganine 1-phosphate + ADP + H(+). It carries out the reaction sphing-4-enine + ATP = sphing-4-enine 1-phosphate + ADP + H(+). It catalyses the reaction 1-O-hexadecyl-2-amino-sn-glycerol + ATP = 1-O-hexadecyl-2-desoxy-2-amino-sn-glycero-3-phosphate + ADP + H(+). With respect to regulation, acetyltransferase activity increases in presence of the kinase substrate, sphingosine. In Purkinje cells, kinase activity on sphingosine increases in presence of VEGFA. In neurons, kinase activity increases during the first 24h in presence of Amyloid-beta protein 42 to decrease after 96h. In terms of biological role, catalyzes the phosphorylation of sphingosine to form sphingosine 1-phosphate (SPP), a lipid mediator with both intra- and extracellular functions. Also acts on D-erythro-sphingosine and to a lesser extent sphinganine, but not other lipids, such as D,L-threo-dihydrosphingosine, N,N-dimethylsphingosine, diacylglycerol, ceramide, or phosphatidylinositol. In contrast to proapoptotic SPHK2, has a negative effect on intracellular ceramide levels, enhances cell growth and inhibits apoptosis. Involved in the regulation of inflammatory response and neuroinflammation. Via the product sphingosine 1-phosphate, stimulates TRAF2 E3 ubiquitin ligase activity, and promotes activation of NF-kappa-B in response to TNF signaling. In response to TNF and in parallel to NF-kappa-B activation, negatively regulates RANTES induction through p38 MAPK signaling pathway. Involved in endocytic membrane trafficking induced by sphingosine, recruited to dilate endosomes, also plays a role on later stages of endosomal maturation and membrane fusion independently of its kinase activity. In Purkinje cells, seems to be also involved in the regulation of autophagosome-lysosome fusion upon VEGFA. Functionally, has serine acetyltransferase activity on PTGS2/COX2 in an acetyl-CoA dependent manner. The acetyltransferase activity increases in presence of the kinase substrate, sphingosine. During neuroinflammation, through PTGS2 acetylation, promotes neuronal secretion of specialized preresolving mediators (SPMs), especially 15-R-lipoxin A4, which results in an increase of phagocytic microglia. The protein is Sphingosine kinase 1 of Mus musculus (Mouse).